A 117-amino-acid polypeptide reads, in one-letter code: Peptidyl-tRNA hydrolase (117 aa).

This sequence belongs to the PTH2 family.

Its subcellular location is the cytoplasm. The enzyme catalyses an N-acyl-L-alpha-aminoacyl-tRNA + H2O = an N-acyl-L-amino acid + a tRNA + H(+). Its function is as follows. The natural substrate for this enzyme may be peptidyl-tRNAs which drop off the ribosome during protein synthesis. This chain is Peptidyl-tRNA hydrolase, found in Thermoplasma acidophilum (strain ATCC 25905 / DSM 1728 / JCM 9062 / NBRC 15155 / AMRC-C165).